The following is a 201-amino-acid chain: Lipopolysaccharide core heptose(II)-phosphate phosphatase (201 aa).

The signal sequence occupies residues 1 to 35 (MLAFTLRFIKNKRYLATLAGALVIIAGLTSQHAWS).

Belongs to the phosphoglycerate mutase family. Ais subfamily.

The protein resides in the periplasm. It participates in bacterial outer membrane biogenesis; lipopolysaccharide metabolism. Its function is as follows. Catalyzes the dephosphorylation of heptose(II) of the outer membrane lipopolysaccharide core. This chain is Lipopolysaccharide core heptose(II)-phosphate phosphatase, found in Salmonella newport (strain SL254).